We begin with the raw amino-acid sequence, 234 residues long: Leucyl/phenylalanyl-tRNA--protein transferase (234 aa).

It belongs to the L/F-transferase family.

The protein localises to the cytoplasm. It carries out the reaction N-terminal L-lysyl-[protein] + L-leucyl-tRNA(Leu) = N-terminal L-leucyl-L-lysyl-[protein] + tRNA(Leu) + H(+). The enzyme catalyses N-terminal L-arginyl-[protein] + L-leucyl-tRNA(Leu) = N-terminal L-leucyl-L-arginyl-[protein] + tRNA(Leu) + H(+). It catalyses the reaction L-phenylalanyl-tRNA(Phe) + an N-terminal L-alpha-aminoacyl-[protein] = an N-terminal L-phenylalanyl-L-alpha-aminoacyl-[protein] + tRNA(Phe). Functions in the N-end rule pathway of protein degradation where it conjugates Leu, Phe and, less efficiently, Met from aminoacyl-tRNAs to the N-termini of proteins containing an N-terminal arginine or lysine. This chain is Leucyl/phenylalanyl-tRNA--protein transferase, found in Enterobacter sp. (strain 638).